Consider the following 685-residue polypeptide: Mannan-binding lectin serine protease 2 (685 aa).

Positions 1 to 19 (MRLLIFLGLLWSLVATLLG) are cleaved as a signal peptide. A CUB 1 domain is found at 20-137 (SKWPEPVFGR…TGFEAFYAAE (118 aa)). The Ca(2+) site is built by Glu67 and Asp75. A disulfide bond links Cys72 and Cys90. N-linked (GlcNAc...) asparagine glycosylation occurs at Asn103. Ca(2+)-binding residues include Asp120, Ser122, Asn123, Asp138, and Glu141. An EGF-like; calcium-binding domain is found at 138-181 (DVDECRVSLGDSVPCDHYCHNYLGGYYCSCRAGYVLHQNKHTCS). Cystine bridges form between Cys142-Cys156, Cys152-Cys165, Cys167-Cys180, Cys184-Cys211, and Cys241-Cys259. Asn158 and Gly162 together coordinate Ca(2+). Position 158 is a (3R)-3-hydroxyasparagine (Asn158). One can recognise a CUB 2 domain in the interval 184 to 296 (CSGQVFTGRS…TGWKIHYTST (113 aa)). Residues Asn285 and Asn308 are each glycosylated (N-linked (GlcNAc...) asparagine). Sushi domains follow at residues 298–363 (RPCP…ECSI) and 364–431 (IDCG…VCEP). Intrachain disulfides connect Cys300-Cys348, Cys328-Cys361, Cys366-Cys411, Cys396-Cys429, Cys433-Cys552, Cys598-Cys617, and Cys628-Cys659. Residues 444 to 683 (IVGGQPAKPG…YIPWIENIIS (240 aa)) form the Peptidase S1 domain. Catalysis depends on charge relay system residues His483 and Asp532. Asn545 is a glycosylation site (N-linked (GlcNAc...) asparagine). Residue Ser632 is the Charge relay system of the active site. The N-linked (GlcNAc...) asparagine glycan is linked to Asn641.

It belongs to the peptidase S1 family. Homodimer; disulfide-linked. Binds MBL2. Isoform 2 binds to MASP1. Binds SERPING1. Post-translationally, the iron and 2-oxoglutarate dependent 3-hydroxylation of aspartate and asparagine is (R) stereospecific within EGF domains. In terms of tissue distribution, plasma.

The protein resides in the secreted. It carries out the reaction Selective cleavage after Arg-223 in complement component C2 (-Ser-Leu-Gly-Arg-|-Lys-Ile-Gln-Ile) and after Arg-76 in complement component C4 (-Gly-Leu-Gln-Arg-|-Ala-Leu-Glu-Ile).. Serum protease that plays an important role in the activation of the complement system via mannose-binding lectin. After activation by auto-catalytic cleavage it cleaves C2 and C4, leading to their activation and to the formation of C3 convertase. The protein is Mannan-binding lectin serine protease 2 (Masp2) of Mus musculus (Mouse).